A 493-amino-acid chain; its full sequence is Chromosomal replication initiator protein DnaA (493 aa).

The tract at residues 1–105 is domain I, interacts with DnaA modulators; it reads MSDTIQQEAP…LMYSIVIDKS (105 aa). The interval 105 to 152 is domain II; the sequence is SQGQPVTIELPHQIDAAPAERSVRPEAPGQKASAERERLEIARPRFES. A disordered region spans residues 121-140; it reads APAERSVRPEAPGQKASAER. The interval 153–370 is domain III, AAA+ region; that stretch reads NLNPKYTFST…GCIVKLLAAH (218 aa). ATP-binding residues include Gly198, Gly200, Lys201, and Thr202. Residues 371 to 493 form a domain IV, binds dsDNA region; sequence SLDNQEIDLQ…LRKRIEIMSM (123 aa).

This sequence belongs to the DnaA family. In terms of assembly, oligomerizes as a right-handed, spiral filament on DNA at oriC.

The protein resides in the cytoplasm. Plays an essential role in the initiation and regulation of chromosomal replication. ATP-DnaA binds to the origin of replication (oriC) to initiate formation of the DNA replication initiation complex once per cell cycle. Binds the DnaA box (a 9 base pair repeat at the origin) and separates the double-stranded (ds)DNA. Forms a right-handed helical filament on oriC DNA; dsDNA binds to the exterior of the filament while single-stranded (ss)DNA is stabiized in the filament's interior. The ATP-DnaA-oriC complex binds and stabilizes one strand of the AT-rich DNA unwinding element (DUE), permitting loading of DNA polymerase. After initiation quickly degrades to an ADP-DnaA complex that is not apt for DNA replication. Binds acidic phospholipids. The sequence is that of Chromosomal replication initiator protein DnaA from Chlorobaculum tepidum (strain ATCC 49652 / DSM 12025 / NBRC 103806 / TLS) (Chlorobium tepidum).